Here is a 487-residue protein sequence, read N- to C-terminus: UDP-glycosyltransferase 72E1 (487 aa).

His-18 (proton acceptor) is an active-site residue. His-18 contributes to the an anthocyanidin binding site. The active-site Charge relay is Asp-116. UDP-alpha-D-glucose-binding residues include Ala-351, Gln-353, His-368, Trp-371, Asn-372, Ser-373, and Glu-376. Ala-391 serves as a coordination point for an anthocyanidin. Glu-392 and Gln-393 together coordinate UDP-alpha-D-glucose.

It belongs to the UDP-glycosyltransferase family. As to quaternary structure, interacts with SIS8. In terms of tissue distribution, expressed in seedlings, roots and leaves.

It is found in the nucleus. It catalyses the reaction (E)-coniferaldehyde + UDP-alpha-D-glucose = 4-O-(beta-D-glucosyl)-4-(E)-coniferyl aldehyde + UDP + H(+). The catalysed reaction is (E)-sinapaldehyde + UDP-alpha-D-glucose = 4-O-(beta-D-glucosyl)-4-trans-sinapoyl aldehyde + UDP + H(+). In terms of biological role, UDP-glycosyltransferase that glucosylates coniferyl aldehyde to form coniferyl aldehyde 4-O-glucoside. Glucosylates sinapyl aldehyde to form sinapyl aldehyde 4-O-glucoside. Is not active in presence of coniferyl alcohol or sinapyl alcohol. Can glucosylate the phytotoxic xenobiotic compound 2,4,5-trichlorophenol (TCP). This Arabidopsis thaliana (Mouse-ear cress) protein is UDP-glycosyltransferase 72E1.